The following is a 66-amino-acid chain: Large ribosomal subunit protein bL35 (66 aa).

The span at 1 to 26 shows a compositional bias: basic residues; the sequence is MPKMKTHRGSAKRFKKTASGKLKRGH. Residues 1 to 28 are disordered; the sequence is MPKMKTHRGSAKRFKKTASGKLKRGHAY.

Belongs to the bacterial ribosomal protein bL35 family.

The protein is Large ribosomal subunit protein bL35 of Geobacillus thermodenitrificans (strain NG80-2).